The primary structure comprises 297 residues: Tumor necrosis factor receptor superfamily member 27 (297 aa).

Topologically, residues 1–138 (MDCQENEYWD…TPTVPPQEAT (138 aa)) are extracellular. TNFR-Cys repeat units lie at residues 2 to 41 (DCQE…DAYC), 43 to 83 (ACPP…NAVC), and 85 to 118 (DCLP…EVQC). Disulfide bonds link Cys-3–Cys-15, Cys-18–Cys-31, Cys-21–Cys-41, Cys-44–Cys-58, Cys-61–Cys-75, Cys-64–Cys-83, Cys-86–Cys-104, and Cys-107–Cys-118. Asn-74 is a glycosylation site (N-linked (GlcNAc...) asparagine). Residues 139–159 (LVALVSSLLVVFTLAFLGLFF) form a helical; Signal-anchor for type III membrane protein membrane-spanning segment. Residues 160-297 (LYCKQFFNRH…LNVPFEVPSP (138 aa)) are Cytoplasmic-facing. Over residues 272–281 (ETLGGNTVES) the composition is skewed to polar residues. Residues 272-297 (ETLGGNTVESTGDRLELNVPFEVPSP) are disordered.

As to quaternary structure, associates with TRAF1, TRAF3 and TRAF6.

The protein resides in the membrane. Its function is as follows. Receptor for EDA isoform A2, but not for EDA isoform A1. Mediates the activation of the NF-kappa-B and JNK pathways. Activation seems to be mediated by binding to TRAF3 and TRAF6. The sequence is that of Tumor necrosis factor receptor superfamily member 27 (EDA2R) from Homo sapiens (Human).